The primary structure comprises 216 residues: Vascular endothelial growth factor A (216 aa).

An N-terminal signal peptide occupies residues 1 to 26 (MNFLLTWIHWGLAALLYFHNAKVLQA). 3 cysteine pairs are disulfide-bonded: Cys-52-Cys-94, Cys-83-Cys-128, and Cys-87-Cys-130. Asn-101 carries an N-linked (GlcNAc...) asparagine glycan. The interval 140 to 161 (QEKKSKREKGKGQKRKRKRGRY) is disordered. Basic residues predominate over residues 145-161 (KREKGKGQKRKRKRGRY).

The protein belongs to the PDGF/VEGF growth factor family. Homodimer; disulfide-linked. Also found as heterodimer with PGF. Interacts to the FLT1/VEGFR1 and KDR/VEGFR2 receptors, heparan sulfate and heparin. Expressed in venom gland, heart, brain, liver, skeletal muscle and kidney.

The protein resides in the secreted. In terms of biological role, growth factor active in angiogenesis, vasculogenesis and endothelial cell growth. Induces endothelial cell proliferation, promotes cell migration, inhibits apoptosis and induces permeabilization of blood vessels. The protein is Vascular endothelial growth factor A of Protobothrops flavoviridis (Habu).